A 339-amino-acid chain; its full sequence is Uricase (339 aa).

Residues Lys-33 and Thr-78 each act as charge relay system in the active site. Urate contacts are provided by Thr-78, Asp-79, Phe-201, Arg-218, Val-266, Gln-267, and Asn-293. The Charge relay system role is filled by His-295. The Microbody targeting signal signature appears at Ser-337–Leu-339.

This sequence belongs to the uricase family.

It localises to the peroxisome. It carries out the reaction urate + O2 + H2O = 5-hydroxyisourate + H2O2. It functions in the pathway purine metabolism; urate degradation; (S)-allantoin from urate: step 1/3. Catalyzes the oxidation of uric acid to 5-hydroxyisourate, which is further processed to form (S)-allantoin. The chain is Uricase (Uro) from Drosophila subobscura (Fruit fly).